The chain runs to 196 residues: Small ribosomal subunit protein uS4c (196 aa).

Residues 16–36 (GALPGLTRKTPKSGSNLKKKF) are disordered. Residues 89–169 (MRLDNILFRL…LPKHLTIDTL (81 aa)) enclose the S4 RNA-binding domain.

This sequence belongs to the universal ribosomal protein uS4 family. In terms of assembly, part of the 30S ribosomal subunit. Contacts protein S5. The interaction surface between S4 and S5 is involved in control of translational fidelity.

The protein resides in the plastid. The protein localises to the chloroplast. Functionally, one of the primary rRNA binding proteins, it binds directly to 16S rRNA where it nucleates assembly of the body of the 30S subunit. Its function is as follows. With S5 and S12 plays an important role in translational accuracy. This is Small ribosomal subunit protein uS4c (rps4) from Brachypodium pinnatum (Tor grass).